Consider the following 331-residue polypeptide: Phosphoribosylformylglycinamidine cyclo-ligase (331 aa).

The protein belongs to the AIR synthase family.

Its subcellular location is the cytoplasm. The catalysed reaction is 2-formamido-N(1)-(5-O-phospho-beta-D-ribosyl)acetamidine + ATP = 5-amino-1-(5-phospho-beta-D-ribosyl)imidazole + ADP + phosphate + H(+). The protein operates within purine metabolism; IMP biosynthesis via de novo pathway; 5-amino-1-(5-phospho-D-ribosyl)imidazole from N(2)-formyl-N(1)-(5-phospho-D-ribosyl)glycinamide: step 2/2. The polypeptide is Phosphoribosylformylglycinamidine cyclo-ligase (Clostridium botulinum (strain Langeland / NCTC 10281 / Type F)).